A 134-amino-acid chain; its full sequence is Small ribosomal subunit protein uS8c (134 aa).

The protein belongs to the universal ribosomal protein uS8 family. In terms of assembly, part of the 30S ribosomal subunit.

Its subcellular location is the plastid. It localises to the chloroplast. One of the primary rRNA binding proteins, it binds directly to 16S rRNA central domain where it helps coordinate assembly of the platform of the 30S subunit. The protein is Small ribosomal subunit protein uS8c (rps8) of Daucus carota (Wild carrot).